The primary structure comprises 762 residues: Putative BTB/POZ domain-containing protein L272 (762 aa).

Positions 16–86 constitute a BTB domain; it reads TDITIILKDE…FYGQKIKSHN (71 aa). Over residues 390-410 the composition is skewed to acidic residues; the sequence is DLDNSNDLNDSNDLDDSDDSN. 2 disordered regions span residues 390–411 and 532–556; these read DLDN…DSND and ISDN…NSDN. Over residues 532–543 the composition is skewed to low complexity; that stretch reads ISDNSDNLNNSD. Residues 737 to 762 adopt a coiled-coil conformation; that stretch reads FSENYCDELINRLNNALKKIEQKYPN.

Belongs to the mimivirus BTB/WD family.

The sequence is that of Putative BTB/POZ domain-containing protein L272 from Acanthamoeba polyphaga (Amoeba).